The following is a 322-amino-acid chain: PIH1 domain-containing protein 2 (322 aa).

Belongs to the PIH1 family.

The sequence is that of PIH1 domain-containing protein 2 (pih1d2) from Danio rerio (Zebrafish).